The chain runs to 284 residues: 2,3,4,5-tetrahydropyridine-2,6-dicarboxylate N-succinyltransferase (284 aa).

The substrate site is built by arginine 111 and aspartate 148.

The protein belongs to the transferase hexapeptide repeat family. Homotrimer.

The protein localises to the cytoplasm. It catalyses the reaction (S)-2,3,4,5-tetrahydrodipicolinate + succinyl-CoA + H2O = (S)-2-succinylamino-6-oxoheptanedioate + CoA. Its pathway is amino-acid biosynthesis; L-lysine biosynthesis via DAP pathway; LL-2,6-diaminopimelate from (S)-tetrahydrodipicolinate (succinylase route): step 1/3. The protein is 2,3,4,5-tetrahydropyridine-2,6-dicarboxylate N-succinyltransferase of Chelativorans sp. (strain BNC1).